Here is a 199-residue protein sequence, read N- to C-terminus: Inner membrane protein E199L (199 aa).

A glycan (N-linked (GlcNAc...) asparagine; by host) is linked at N131. Residues I150–I170 traverse the membrane as a helical segment.

The protein belongs to the asfivirus E199L family. Interacts with host PYCR2; this interaction results in autophagy activation. Contains intramolecular disulfide bonds.

The protein resides in the virion membrane. The protein localises to the host membrane. Its function is as follows. Essential for viral fusion with host endosomal membrane and core release. Not required for virus morphogenesis and egress. Induces complete autophagy through the interaction with and down-regulation of host PYCR2. This African swine fever virus (isolate Tick/South Africa/Pretoriuskop Pr4/1996) (ASFV) protein is Inner membrane protein E199L.